Reading from the N-terminus, the 611-residue chain is Dihydroxy-acid dehydratase (611 aa).

Position 81 (Asp81) interacts with Mg(2+). Cys122 serves as a coordination point for [2Fe-2S] cluster. Residues Asp123 and Lys124 each contribute to the Mg(2+) site. Lys124 is modified (N6-carboxylysine). Cys195 contributes to the [2Fe-2S] cluster binding site. Position 491 (Glu491) interacts with Mg(2+). Residue Ser517 is the Proton acceptor of the active site.

This sequence belongs to the IlvD/Edd family. In terms of assembly, homodimer. The cofactor is [2Fe-2S] cluster. It depends on Mg(2+) as a cofactor.

The enzyme catalyses (2R)-2,3-dihydroxy-3-methylbutanoate = 3-methyl-2-oxobutanoate + H2O. The catalysed reaction is (2R,3R)-2,3-dihydroxy-3-methylpentanoate = (S)-3-methyl-2-oxopentanoate + H2O. The protein operates within amino-acid biosynthesis; L-isoleucine biosynthesis; L-isoleucine from 2-oxobutanoate: step 3/4. It participates in amino-acid biosynthesis; L-valine biosynthesis; L-valine from pyruvate: step 3/4. In terms of biological role, functions in the biosynthesis of branched-chain amino acids. Catalyzes the dehydration of (2R,3R)-2,3-dihydroxy-3-methylpentanoate (2,3-dihydroxy-3-methylvalerate) into 2-oxo-3-methylpentanoate (2-oxo-3-methylvalerate) and of (2R)-2,3-dihydroxy-3-methylbutanoate (2,3-dihydroxyisovalerate) into 2-oxo-3-methylbutanoate (2-oxoisovalerate), the penultimate precursor to L-isoleucine and L-valine, respectively. The chain is Dihydroxy-acid dehydratase from Pasteurella multocida (strain Pm70).